Consider the following 397-residue polypeptide: Growth-regulating factor 5 (397 aa).

In terms of domain architecture, QLQ spans 16–51; that stretch reads PFTPTQWEELEHQALIYKYMVSGVPVPPELIFSIRR. 2 short sequence motifs (bipartite nuclear localization signal) span residues 78-96 and 114-121; these read RKPDPEPGRCRRTDGKKWR and RGRNRARK. One can recognise a WRC domain in the interval 81-125; it reads DPEPGRCRRTDGKKWRCSREAYPDSKYCEKHMHRGRNRARKSLDQ. 4 disordered regions span residues 108–172, 197–217, 288–320, and 340–397; these read CEKH…SMDA, LDYPYPSTSPKQQQQTLHHAS, PYHHCSTDHNKIDHHHTYSSSSSSQHLHHDHDH, and VLAN…DTGS. Over residues 111–120 the composition is skewed to basic residues; sequence HMHRGRNRAR. A compositionally biased stretch (low complexity) spans 128–172; the sequence is TTTTPLTSPSLSFTNNNNPSPTLSSSSSSNSSSTTYSASSSSMDA. A compositionally biased stretch (basic and acidic residues) spans 288–298; the sequence is PYHHCSTDHNK.

Belongs to the GRF family. Interacts with GIF1. In terms of tissue distribution, strongly expressed in actively growing and developing tissues, such as roots, upper stems, and shoot tips containing the shoot apical meristem (SAM) and flower buds. Also expressed in mature flowers, but weakly expressed in mature stems and leaves.

It localises to the nucleus. Transcription activator that plays a role in the regulation of cell expansion in leaf and cotyledons tissues. Acts together with GIF1 for the development of appropriate leaf size and shape through the promotion and/or maintenance of cell proliferation activity in leaf primordia. The sequence is that of Growth-regulating factor 5 (GRF5) from Arabidopsis thaliana (Mouse-ear cress).